Here is a 221-residue protein sequence, read N- to C-terminus: Chaperone protein TorD (221 aa).

Belongs to the TorD/DmsD family. TorD subfamily.

Its subcellular location is the cytoplasm. Its function is as follows. Involved in the biogenesis of TorA. Acts on TorA before the insertion of the molybdenum cofactor and, as a result, probably favors a conformation of the apoenzyme that is competent for acquiring the cofactor. The chain is Chaperone protein TorD from Psychrobacter sp. (strain PRwf-1).